Reading from the N-terminus, the 296-residue chain is 33 kDa chaperonin (296 aa).

2 disulfide bridges follow: Cys233-Cys235 and Cys267-Cys270.

The protein belongs to the HSP33 family. In terms of processing, under oxidizing conditions two disulfide bonds are formed involving the reactive cysteines. Under reducing conditions zinc is bound to the reactive cysteines and the protein is inactive.

The protein localises to the cytoplasm. Its function is as follows. Redox regulated molecular chaperone. Protects both thermally unfolding and oxidatively damaged proteins from irreversible aggregation. Plays an important role in the bacterial defense system toward oxidative stress. The sequence is that of 33 kDa chaperonin from Actinobacillus pleuropneumoniae serotype 3 (strain JL03).